We begin with the raw amino-acid sequence, 62 residues long: Large ribosomal subunit protein bL28 (62 aa).

This sequence belongs to the bacterial ribosomal protein bL28 family.

The chain is Large ribosomal subunit protein bL28 from Phytoplasma mali (strain AT).